The sequence spans 210 residues: Protein LURP-one-related 5 (210 aa).

Belongs to the LOR family.

Functionally, might be related to the phospholipid scramblase and tubby-like superfamily of membrane tethered transcription factors. In Arabidopsis thaliana (Mouse-ear cress), this protein is Protein LURP-one-related 5.